The sequence spans 362 residues: Sterol-4-alpha-carboxylate 3-dehydrogenase, decarboxylating (362 aa).

An N-acetylmethionine modification is found at Met1. Tyr161 acts as the Proton acceptor in catalysis. Residue Lys165 participates in NAD(+) binding. A helical transmembrane segment spans residues 287 to 307 (WMAYYLAFLLSLLVMVVSPLI). Residues 359–362 (RKDK) carry the Prevents secretion from ER motif.

This sequence belongs to the 3-beta-HSD family. As to quaternary structure, homodimer.

The protein localises to the endoplasmic reticulum membrane. It localises to the lipid droplet. The catalysed reaction is a 3beta-hydroxysteroid-4alpha-carboxylate + NADP(+) = a 3-oxosteroid + CO2 + NADPH. It catalyses the reaction a 3beta-hydroxysteroid-4alpha-carboxylate + NAD(+) = a 3-oxosteroid + CO2 + NADH. The enzyme catalyses 4alpha-carboxyzymosterol + NADP(+) = zymosterone + CO2 + NADPH. It carries out the reaction 4alpha-carboxy-4beta-methyl-5alpha-cholest-8-en-3beta-ol + NADP(+) = 4alpha-methyl-5alpha-cholest-8-en-3-one + CO2 + NADPH. The catalysed reaction is 4alpha-carboxy-5alpha-cholest-8-ene-3beta-ol + NADP(+) = 5alpha-cholest-8-en-3-one + CO2 + NADPH. It catalyses the reaction 4beta-methylzymosterol-4alpha-carboxylate + NADP(+) = 3-dehydro-4-methylzymosterol + CO2 + NADPH. The enzyme catalyses 4beta-methylzymosterol-4alpha-carboxylate + NAD(+) = 3-dehydro-4-methylzymosterol + CO2 + NADH. It carries out the reaction 4alpha-carboxy-5alpha-cholest-8-ene-3beta-ol + NAD(+) = 5alpha-cholest-8-en-3-one + CO2 + NADH. The catalysed reaction is 4alpha-carboxy-4beta-methyl-5alpha-cholest-8-en-3beta-ol + NAD(+) = 4alpha-methyl-5alpha-cholest-8-en-3-one + CO2 + NADH. It catalyses the reaction 4alpha-carboxyzymosterol + NAD(+) = zymosterone + CO2 + NADH. Its pathway is steroid biosynthesis; zymosterol biosynthesis; zymosterol from lanosterol: step 4/6. Catalyzes the NAD(P)(+)-dependent oxidative decarboxylation of the C4 methyl groups of 4-alpha-carboxysterols in post-squalene cholesterol biosynthesis. Plays a role in the regulation of the endocytic trafficking of EGFR. This chain is Sterol-4-alpha-carboxylate 3-dehydrogenase, decarboxylating (Nsdhl), found in Mus musculus (Mouse).